A 566-amino-acid polypeptide reads, in one-letter code: Proline--tRNA ligase 1 (566 aa).

Belongs to the class-II aminoacyl-tRNA synthetase family. ProS type 1 subfamily. Homodimer.

Its subcellular location is the cytoplasm. The catalysed reaction is tRNA(Pro) + L-proline + ATP = L-prolyl-tRNA(Pro) + AMP + diphosphate. Its function is as follows. Catalyzes the attachment of proline to tRNA(Pro) in a two-step reaction: proline is first activated by ATP to form Pro-AMP and then transferred to the acceptor end of tRNA(Pro). As ProRS can inadvertently accommodate and process non-cognate amino acids such as alanine and cysteine, to avoid such errors it has two additional distinct editing activities against alanine. One activity is designated as 'pretransfer' editing and involves the tRNA(Pro)-independent hydrolysis of activated Ala-AMP. The other activity is designated 'posttransfer' editing and involves deacylation of mischarged Ala-tRNA(Pro). The misacylated Cys-tRNA(Pro) is not edited by ProRS. The protein is Proline--tRNA ligase 1 of Bacillus cereus (strain ATCC 14579 / DSM 31 / CCUG 7414 / JCM 2152 / NBRC 15305 / NCIMB 9373 / NCTC 2599 / NRRL B-3711).